Reading from the N-terminus, the 471-residue chain is 5-hydroxytryptamine receptor 2A (471 aa).

Over 1-80 (MDILCEENTS…LQEKNWSALL (80 aa)) the chain is Extracellular. Residue Asn38 is glycosylated (N-linked (GlcNAc...) asparagine). Residues 81 to 97 (TAVVIILTIAGNILVIM) form a helical membrane-spanning segment. Residues 98–111 (AVSLEKKLQNATNY) lie on the Cytoplasmic side of the membrane. A helical membrane pass occupies residues 112-137 (FLMSLAIADMLLGFLVMPVSMLTILY). At 138–146 (GYRWPLPSK) the chain is on the extracellular side. Residues 147-171 (LCAVWIYLDVLFSTASIMHLCAISL) traverse the membrane as a helical segment. Residues Cys148 and Cys227 are joined by a disulfide bond. Asp155 contacts serotonin. The short motif at 172–174 (DRY) is the DRY motif; important for ligand-induced conformation changes element. At 172–191 (DRYVAIQNPIHHSRFNSRTK) the chain is on the cytoplasmic side. A helical transmembrane segment spans residues 192-215 (AFLKIIAVWTISVGISMPIPVFGL). Over 216–232 (QDDSKVFKEGSCLLADD) the chain is Extracellular. A helical membrane pass occupies residues 233 to 258 (NFVLIGSFVSFFIPLTIMVITYFLTI). Topologically, residues 259-322 (KSLQKEATLC…QSISNEQKAC (64 aa)) are cytoplasmic. Residue Ser280 is modified to Phosphoserine. Residues 323–348 (KVLGIVFSLFVVMWCPFFITNIMAVI) form a helical membrane-spanning segment. Asn343 lines the serotonin pocket. Cys349 and Cys353 are joined by a disulfide. Residues 349-356 (CKESCNED) are Extracellular-facing. A helical membrane pass occupies residues 357-382 (VIGALLNVFVWIGYLSSAVNPLVYTL). An NPxxY motif; important for ligand-induced conformation changes and signaling motif is present at residues 376 to 380 (NPLVY). Topologically, residues 383–471 (FNKTYRSAFS…DGVNEKVSCV (89 aa)) are cytoplasmic. The tract at residues 450–471 (KQHSEDASKDNSDGVNEKVSCV) is disordered. Residues 451–465 (QHSEDASKDNSDGVN) show a composition bias toward basic and acidic residues. The PDZ-binding signature appears at 469–471 (SCV).

The protein belongs to the G-protein coupled receptor 1 family. Interacts (via C-terminus) with MPDZ and PATJ. May interact (via C-terminus) with MPP3, PRDX6, DLG4, DLG1, CASK, APBA1 and MAGI2. Interacts with GRM2 and DRD2; this may affect signaling.

The protein resides in the cell membrane. Its subcellular location is the cell projection. The protein localises to the dendrite. It localises to the axon. It is found in the cytoplasmic vesicle. The protein resides in the membrane. Its subcellular location is the caveola. The protein localises to the presynapse. With respect to regulation, G-protein coupled receptor activity is regulated by lipids: oleamide increases HTR2A-mediated activity. Functionally, G-protein coupled receptor for 5-hydroxytryptamine (serotonin). Also functions as a receptor for various drugs and psychoactive substances, including mescaline, psilocybin, 1-(2,5-dimethoxy-4-iodophenyl)-2-aminopropane (DOI) and lysergic acid diethylamide (LSD). Ligand binding causes a conformation change that triggers signaling via guanine nucleotide-binding proteins (G proteins) and modulates the activity of downstream effectors. HTR2A is coupled to G(q)/G(11) G alpha proteins and activates phospholipase C-beta, releasing diacylglycerol (DAG) and inositol 1,4,5-trisphosphate (IP3) second messengers that modulate the activity of phosphatidylinositol 3-kinase and promote the release of Ca(2+) ions from intracellular stores, respectively. Beta-arrestin family members inhibit signaling via G proteins and mediate activation of alternative signaling pathways. Affects neural activity, perception, cognition and mood. Plays a role in the regulation of behavior, including responses to anxiogenic situations and psychoactive substances. Plays a role in intestinal smooth muscle contraction, and may play a role in arterial vasoconstriction. The polypeptide is 5-hydroxytryptamine receptor 2A (HTR2A) (Pongo pygmaeus (Bornean orangutan)).